We begin with the raw amino-acid sequence, 362 residues long: Myricetin 3'/5'-O-methyltransferase 1 (362 aa).

Aspartate 229 serves as a coordination point for S-adenosyl-L-methionine. Histidine 267 serves as the catalytic Proton acceptor.

This sequence belongs to the class I-like SAM-binding methyltransferase superfamily. Cation-independent O-methyltransferase family. Homodimer. Mainly expressed in leaves secreting glandular trichomes types 1 and 4 and, to a lesser extent, in storage trichomes type 6.

The catalysed reaction is myricetin + S-adenosyl-L-methionine = laricitrin + S-adenosyl-L-homocysteine + H(+). It catalyses the reaction laricitrin + S-adenosyl-L-methionine = syringetin + S-adenosyl-L-homocysteine + H(+). It carries out the reaction a 3'-hydroxyflavone + S-adenosyl-L-methionine = a 3'-methoxyflavone + S-adenosyl-L-homocysteine + H(+). The enzyme catalyses a 5'-hydroxy-3'-methoxyflavone + S-adenosyl-L-methionine = a 3',5'-dimethoxyflavone + S-adenosyl-L-homocysteine + H(+). The catalysed reaction is quercetin + S-adenosyl-L-methionine = isorhamnetin + S-adenosyl-L-homocysteine + H(+). It catalyses the reaction rhamnetin + S-adenosyl-L-methionine = rhamnacene + S-adenosyl-L-homocysteine + H(+). It carries out the reaction 3',4',5,7-tetrahydroxy-3-methoxyflavone + S-adenosyl-L-methionine = 3,3'-O-dimethylquercetin + S-adenosyl-L-homocysteine + H(+). It functions in the pathway flavonoid metabolism. In terms of biological role, flavonoid 3'/5'-O-methyltransferase involved in the biosynthesis of polymethoxylated flavonoids natural products such as myricetin derivatives, aroma compounds possessing antioxidant properties and exhibiting pharmacological activities such as anti-carcinogen, anti-viral, anti-thrombotic, anti-diabetic, anti-atherosclerotic, and anti-inflammatory effects. Catalyzes S-adenosylmethionine-dependent regioselective 3'/5'-O-methylation of flavonoids; active on various hydroxylated flavonoid substrates, including myricetin and quercetin, but inactive toward kaempferol. Mediates the formation of 3'-methyl derivatives from quercetin, myricetin, 3-methyl quercetin and 7-methyl quercetin (rhamnetin), producing 3'-methyl quercetin (isorhamnetin), 3'-methyl myricetin (laricitrin), 3,3'-dimethyl quercetin (3-O-methylisorhamnetin) and 7,3'-dimethyl quercetin (7-O-methylisorhamnetin), respectively. Triggers the 5'-O-methylation of 3'-methyl myricetin (laricitrin), thus leading to production of 3',5'-dimethyl myricetin (syringetin). The polypeptide is Myricetin 3'/5'-O-methyltransferase 1 (Solanum habrochaites (Wild tomato)).